Reading from the N-terminus, the 466-residue chain is Asparagine--tRNA ligase (466 aa).

Belongs to the class-II aminoacyl-tRNA synthetase family. As to quaternary structure, homodimer.

It localises to the cytoplasm. The catalysed reaction is tRNA(Asn) + L-asparagine + ATP = L-asparaginyl-tRNA(Asn) + AMP + diphosphate + H(+). This Sodalis glossinidius (strain morsitans) protein is Asparagine--tRNA ligase.